A 268-amino-acid polypeptide reads, in one-letter code: MPITPRHLRQWKQQGRPIVALTAWDFAIASILDEAGIDLVLVGDSLAMVALGHPTTLPLSLEDMIHHVQAVQRGCRNALIVSDLPFLSYQTSPEDAILAAGQLLKVTEAQAVKLEGGYPRLLETVQRLVEVGIPVMGHVGLTPQSVRQLGYRQQGQTPEAQQQILDQALALEAAGAFAIVLEHIPDRLAAMITAKLSIPTIGIGAGPNCDGQILVTADLLGLTPSQPPFAPAYLNLRQAIGSAVQRYAREVRDRQFLQSQPAEQEPLS.

Residues aspartate 44 and aspartate 83 each contribute to the Mg(2+) site. 3-methyl-2-oxobutanoate-binding positions include 44–45, aspartate 83, and lysine 113; that span reads DS. Residue glutamate 115 participates in Mg(2+) binding. Glutamate 182 acts as the Proton acceptor in catalysis.

This sequence belongs to the PanB family. Homodecamer; pentamer of dimers. The cofactor is Mg(2+).

Its subcellular location is the cytoplasm. The enzyme catalyses 3-methyl-2-oxobutanoate + (6R)-5,10-methylene-5,6,7,8-tetrahydrofolate + H2O = 2-dehydropantoate + (6S)-5,6,7,8-tetrahydrofolate. It functions in the pathway cofactor biosynthesis; (R)-pantothenate biosynthesis; (R)-pantoate from 3-methyl-2-oxobutanoate: step 1/2. In terms of biological role, catalyzes the reversible reaction in which hydroxymethyl group from 5,10-methylenetetrahydrofolate is transferred onto alpha-ketoisovalerate to form ketopantoate. The sequence is that of 3-methyl-2-oxobutanoate hydroxymethyltransferase from Synechococcus elongatus (strain ATCC 33912 / PCC 7942 / FACHB-805) (Anacystis nidulans R2).